A 114-amino-acid chain; its full sequence is uncharacterized protein (114 aa).

One can recognise an HIT domain in the interval 6–114 (IFGKIIRREI…GGRSLAWPPG (109 aa)). The Histidine triad motif motif lies at 98–102 (HLHIH).

This is an uncharacterized protein from Synechococcus elongatus (strain ATCC 33912 / PCC 7942 / FACHB-805) (Anacystis nidulans R2).